A 639-amino-acid chain; its full sequence is Tubulin--tyrosine ligase-like protein 12 (639 aa).

The region spanning 295-639 (PQGHVFRVHC…TDNCHVTRII (345 aa)) is the TTL domain. ATP contacts are provided by residues 445 to 448 (SKYI), Lys463, and Asp465.

The protein belongs to the tubulin--tyrosine ligase family. In terms of assembly, interacts with MAVS; the interaction prevents MAVS binding to TBK1 and IKBKE. Interacts (via N-terminus) with TBK1 (via protein kinase domain). Interacts (via TTL domain) with IKBKE (via protein kinase domain). Interacts with tubulin alpha. Interacts with histone H3 and histone H4 (when trimethylated at 'Lys-20' (H4K20me3)). Interacts with CBX3. In terms of tissue distribution, widely expressed with highest levels in brain, kidney, liver, lung, muscle and testis.

Its subcellular location is the cytoplasm. It localises to the midbody. The protein localises to the cytoskeleton. It is found in the microtubule organizing center. The protein resides in the centrosome. Its subcellular location is the spindle. It localises to the nucleus. Its function is as follows. Negatively regulates post-translational modifications of tubulin, including detyrosination of the C-terminus and polyglutamylation of glutamate residues. Also, indirectly promotes histone H4 trimethylation at 'Lys-20' (H4K20me3). Probably by controlling tubulin and/or histone H4 post-translational modifications, plays a role in mitosis and in maintaining chromosome number stability. During RNA virus-mediated infection, acts as a negative regulator of the RIG-I pathway by preventing MAVS binding to TBK1 and IKBKE. The chain is Tubulin--tyrosine ligase-like protein 12 from Mus musculus (Mouse).